Consider the following 255-residue polypeptide: 14-3-3 protein epsilon (255 aa).

Position 1 is an N-acetylmethionine (M1). N6-acetyllysine; alternate is present on K50. K50 participates in a covalent cross-link: Glycyl lysine isopeptide (Lys-Gly) (interchain with G-Cter in SUMO2); alternate. Residue S65 is modified to Phosphoserine. An N6-acetyllysine mark is found at K69, K118, and K123. Y131 is modified (phosphotyrosine). T137 carries the post-translational modification Phosphothreonine. The residue at position 210 (S210) is a Phosphoserine. A Phosphothreonine modification is found at T232. The segment at 234-255 (DMQGDGEEQNKEALQDVEDENQ) is disordered.

Belongs to the 14-3-3 family. As to quaternary structure, homodimer. Heterodimerizes with YWHAZ. Interacts with PKA-phosphorylated AANAT. Interacts with ABL1 (phosphorylated form); the interaction retains it in the cytoplasm. Interacts with ARHGEF28. Interacts with BEX3. Weakly interacts with CDKN1B. Interacts with the 'Thr-369' phosphorylated form of DAPK2. Interacts with DENND1A. Interacts with GAB2. Interacts with phosphorylated GRB10. Interacts with KSR1. Interacts with NDEL1. Interacts with PI4KB, TBC1D22A and TBC1D22B. Interacts with the phosphorylated (by AKT1) form of SRPK2. Interacts with TIAM2. Interacts with the 'Ser-1134' and 'Ser-1161' phosphorylated form of SOS1. Interacts with ZFP36 (via phosphorylated form). Interacts with SLITRK1. Interacts with HSF1 (via phosphorylated form); this interaction promotes HSF1 sequestration in the cytoplasm in a ERK-dependent manner. Interacts with RIPOR2. Interacts with KLHL22; required for the nuclear localization of KLHL22 upon amino acid starvation. Interacts with CRTC1. Interacts with CRTC2 (probably when phosphorylated at 'Ser-171'). Interacts with CRTC3 (probably when phosphorylated at 'Ser-162' and/or 'Ser-273'). Interacts with ATP2B1 and ATP2B3; this interaction inhibits calcium-transporting ATPase activity. Interacts with MEFV. Interacts with RNF115. Interacts with GPR15; this interaction promotes ER-to-Golgi transport of GPR15.

Its subcellular location is the nucleus. It is found in the cytoplasm. The protein resides in the melanosome. Functionally, adapter protein implicated in the regulation of a large spectrum of both general and specialized signaling pathways. Binds to a large number of partners, usually by recognition of a phosphoserine or phosphothreonine motif. Binding generally results in the modulation of the activity of the binding partner. Positively regulates phosphorylated protein HSF1 nuclear export to the cytoplasm. This chain is 14-3-3 protein epsilon (Ywhae), found in Rattus norvegicus (Rat).